The primary structure comprises 116 residues: Large ribosomal subunit protein bL20 (116 aa).

The protein belongs to the bacterial ribosomal protein bL20 family.

In terms of biological role, binds directly to 23S ribosomal RNA and is necessary for the in vitro assembly process of the 50S ribosomal subunit. It is not involved in the protein synthesizing functions of that subunit. The sequence is that of Large ribosomal subunit protein bL20 from Helicobacter acinonychis (strain Sheeba).